A 345-amino-acid chain; its full sequence is Acetylserotonin O-methyltransferase (345 aa).

S-adenosyl-L-methionine is bound by residues Tyr-147, Trp-164, Asp-210, 235-237 (GDF), and Arg-252. Catalysis depends on His-255, which acts as the Proton donor/acceptor. Residues Asp-256, Asn-302, and Gln-306 each contribute to the substrate site.

It belongs to the class I-like SAM-binding methyltransferase superfamily. Cation-independent O-methyltransferase family. As to quaternary structure, homodimer. As to expression, expressed in the pineal gland (at protein level). Not detectable in retina, nor in liver.

The enzyme catalyses N-acetylserotonin + S-adenosyl-L-methionine = melatonin + S-adenosyl-L-homocysteine + H(+). It participates in aromatic compound metabolism; melatonin biosynthesis; melatonin from serotonin: step 1/2. Catalyzes the transfer of a methyl group onto N-acetylserotonin, producing melatonin (N-acetyl-5-methoxytryptamine). This chain is Acetylserotonin O-methyltransferase (ASMT), found in Bos taurus (Bovine).